Reading from the N-terminus, the 161-residue chain is MLFSFRAIVLFYCCMLTFAGIGFLWNPKFVVESGLVALIGASMEVKPLIVTQDNLSTLALSGLVFLILGMIYTISLLQSNFLFFSGITPIRAIFDFILTGFIYLKKEHIASNSLTFTFAFCDLMWQFWMFAAMSEERAKYLKNQKKAEELAARKAREVEES.

Topologically, residues 1–6 (MLFSFR) are cytoplasmic. The chain crosses the membrane as a helical span at residues 7–27 (AIVLFYCCMLTFAGIGFLWNP). Residues 28-56 (KFVVESGLVALIGASMEVKPLIVTQDNLS) lie on the Lumenal side of the membrane. A helical transmembrane segment spans residues 57-77 (TLALSGLVFLILGMIYTISLL). At 78–81 (QSNF) the chain is on the cytoplasmic side. Residues 82–102 (LFFSGITPIRAIFDFILTGFI) form a helical membrane-spanning segment. Over 103 to 112 (YLKKEHIASN) the chain is Lumenal. Residues 113-133 (SLTFTFAFCDLMWQFWMFAAM) traverse the membrane as a helical segment. The Cytoplasmic portion of the chain corresponds to 134-161 (SEERAKYLKNQKKAEELAARKAREVEES).

Belongs to the ILM1 family.

Its subcellular location is the endoplasmic reticulum. It is found in the membrane. This Schizosaccharomyces pombe (strain 972 / ATCC 24843) (Fission yeast) protein is Protein ilm1.